Here is a 260-residue protein sequence, read N- to C-terminus: Magnesium dechelatase SGRL, chloroplastic (260 aa).

The transit peptide at 1 to 45 directs the protein to the chloroplast; the sequence is MACYIVPYYHHPVLSHPNREIFSHRHHHHHRFCNNLLNRRISVPR.

The protein belongs to the staygreen family. Interacts with the light harvesting complex II (LHCII). Interacts with the chlorophyll catabolic enzymes (CCEs) NYC1, NOL, PAO and RCCR. In terms of tissue distribution, expressed in cotyledons, pollen and young leaves.

The protein localises to the plastid. The protein resides in the chloroplast thylakoid. It carries out the reaction chlorophyllide a + 2 H(+) = pheophorbide a + Mg(2+). In terms of biological role, magnesium chelatase involved in chlorophyll a degradation in the chlorophyll-protein complexes of photosystem I (PSI) and photosystem II (PSII). Contributes to the degradation of PSI and PSII in the thylakoid membranes. Recombinant SGRL possesses high dechelating activity against chlorophyllide a, very low activity against chlorophyll a, and no activity against chlorophyll b. Contributes to abiotic stress-induced chlorophyll degradation and leaf yellowing during vegetative plant growth. This chain is Magnesium dechelatase SGRL, chloroplastic, found in Arabidopsis thaliana (Mouse-ear cress).